The chain runs to 503 residues: ATP synthase subunit alpha (503 aa).

An ATP-binding site is contributed by 169–176; that stretch reads GDRGTGKT.

It belongs to the ATPase alpha/beta chains family. In terms of assembly, F-type ATPases have 2 components, CF(1) - the catalytic core - and CF(0) - the membrane proton channel. CF(1) has five subunits: alpha(3), beta(3), gamma(1), delta(1), epsilon(1). CF(0) has three main subunits: a(1), b(2) and c(9-12). The alpha and beta chains form an alternating ring which encloses part of the gamma chain. CF(1) is attached to CF(0) by a central stalk formed by the gamma and epsilon chains, while a peripheral stalk is formed by the delta and b chains.

The protein localises to the cell inner membrane. The enzyme catalyses ATP + H2O + 4 H(+)(in) = ADP + phosphate + 5 H(+)(out). Produces ATP from ADP in the presence of a proton gradient across the membrane. The alpha chain is a regulatory subunit. This chain is ATP synthase subunit alpha, found in Leptospira borgpetersenii serovar Hardjo-bovis (strain L550).